Consider the following 356-residue polypeptide: DNA polymerase IV (356 aa).

The UmuC domain maps to 7-188 (IIHIDMDCFY…LPLKKIPRVG (182 aa)). Positions 11 and 106 each coordinate Mg(2+). Glutamate 107 is an active-site residue.

This sequence belongs to the DNA polymerase type-Y family. Monomer. Mg(2+) is required as a cofactor.

It localises to the cytoplasm. The enzyme catalyses DNA(n) + a 2'-deoxyribonucleoside 5'-triphosphate = DNA(n+1) + diphosphate. Its function is as follows. Poorly processive, error-prone DNA polymerase involved in untargeted mutagenesis. Copies undamaged DNA at stalled replication forks, which arise in vivo from mismatched or misaligned primer ends. These misaligned primers can be extended by PolIV. Exhibits no 3'-5' exonuclease (proofreading) activity. May be involved in translesional synthesis, in conjunction with the beta clamp from PolIII. This is DNA polymerase IV from Actinobacillus pleuropneumoniae serotype 5b (strain L20).